The chain runs to 156 residues: Ribosomal RNA large subunit methyltransferase H (156 aa).

S-adenosyl-L-methionine contacts are provided by residues leucine 73, glycine 104, and valine 123–leucine 128.

The protein belongs to the RNA methyltransferase RlmH family. In terms of assembly, homodimer.

It localises to the cytoplasm. The enzyme catalyses pseudouridine(1915) in 23S rRNA + S-adenosyl-L-methionine = N(3)-methylpseudouridine(1915) in 23S rRNA + S-adenosyl-L-homocysteine + H(+). Its function is as follows. Specifically methylates the pseudouridine at position 1915 (m3Psi1915) in 23S rRNA. This Burkholderia mallei (strain NCTC 10247) protein is Ribosomal RNA large subunit methyltransferase H.